The chain runs to 74 residues: Brevinin-2Ef (74 aa).

The first 22 residues, 1–22, serve as a signal peptide directing secretion; the sequence is MFTMKKSLLLIFFLGTISLSLC. The propeptide occupies 23–41; that stretch reads QEERNADDDDGEMTEEEKR. The cysteines at positions 68 and 74 are disulfide-linked.

Belongs to the frog skin active peptide (FSAP) family. Brevinin subfamily. As to expression, expressed by the skin glands.

It is found in the secreted. Shows antibacterial activity against representative Gram-negative and Gram-positive bacterial species, and hemolytic activity. In Pelophylax lessonae (Pool frog), this protein is Brevinin-2Ef.